Consider the following 487-residue polypeptide: Mu-like prophage FluMu tail sheath protein (487 aa).

Belongs to the myoviridae tail sheath protein family.

Its function is as follows. Major component of the tail. The chain is Mu-like prophage FluMu tail sheath protein from Haemophilus influenzae (strain ATCC 51907 / DSM 11121 / KW20 / Rd).